Consider the following 200-residue polypeptide: LHFPL tetraspan subfamily member 6 protein (200 aa).

The N-terminal stretch at Met1–Ala21 is a signal peptide. The next 2 helical transmembrane spans lie at Ile84 to Ile104 and Gly123 to Trp143. N-linked (GlcNAc...) asparagine glycosylation is present at Asn154. The chain crosses the membrane as a helical span at residues Cys172–Gly192.

This sequence belongs to the LHFP family.

The protein resides in the membrane. In Danio rerio (Zebrafish), this protein is LHFPL tetraspan subfamily member 6 protein.